The chain runs to 771 residues: Polyribonucleotide nucleotidyltransferase (771 aa).

Mg(2+)-binding residues include D487 and D493. Positions 554 to 613 (PRIETMQIDKAKIRDVIGTGGKVIREIVATTGAKVDIDDEGLIKISSSDLDQIEAARKWI) constitute a KH domain. In terms of domain architecture, S1 motif spans 623 to 691 (GKIYDGKVVN…PRGKVRLSMR (69 aa)). The tract at residues 696–771 (ETGAELEDTR…QGHVPDFLKD (76 aa)) is disordered. Positions 702–771 (EDTRPAREPR…QGHVPDFLKD (70 aa)) are enriched in basic and acidic residues.

The protein belongs to the polyribonucleotide nucleotidyltransferase family. Mg(2+) serves as cofactor.

The protein localises to the cytoplasm. The enzyme catalyses RNA(n+1) + phosphate = RNA(n) + a ribonucleoside 5'-diphosphate. In terms of biological role, involved in mRNA degradation. Catalyzes the phosphorolysis of single-stranded polyribonucleotides processively in the 3'- to 5'-direction. This Sphingopyxis alaskensis (strain DSM 13593 / LMG 18877 / RB2256) (Sphingomonas alaskensis) protein is Polyribonucleotide nucleotidyltransferase.